A 231-amino-acid polypeptide reads, in one-letter code: MPELAVRTEFDYSSEIYKDAYSRINAIVIEGEQEAYSNYLQMAELLPEDKEELTRLAKMENRHKKGFQACGNNLQVNPDMPYAQEFFAGLHGNFQHAFSEGKVVTCLLIQALIIEAFAIAAYNIYIPVADDFARKITEGVVKDEYTHLNYGEEWLKANFATAKEELEQANKENLPLVWKMLNQVQGDAKVLGMEKEALVEDFMISYGEALSNIGFSTREIMRMSSYGLAGV.

Fe cation contacts are provided by glutamate 32, glutamate 60, histidine 63, glutamate 115, and histidine 147.

This sequence belongs to the aldehyde decarbonylase family. The cofactor is Binds 2 metal cations per subunit. The catalytic dinuclear metal-binding site could be either a di-iron or a manganese-iron cofactor..

It carries out the reaction a long-chain fatty aldehyde + 2 NADPH + O2 + H(+) = a long-chain alkane + formate + 2 NADP(+) + H2O. Catalyzes the decarbonylation of fatty aldehydes to alkanes. Requires the presence of ferredoxin, ferredoxin reductase and NADPH for in vitro decarbonylase activity. Involved in the biosynthesis of alkanes, mainly heptadecane and pentadecane. The protein is Aldehyde decarbonylase of Synechocystis sp. (strain ATCC 27184 / PCC 6803 / Kazusa).